Reading from the N-terminus, the 440-residue chain is Xylose isomerase (440 aa).

Catalysis depends on residues histidine 100 and aspartate 103. The Mg(2+) site is built by glutamate 231, glutamate 267, histidine 270, aspartate 295, aspartate 306, aspartate 308, and aspartate 338.

The protein belongs to the xylose isomerase family. Homotetramer. Requires Mg(2+) as cofactor.

Its subcellular location is the cytoplasm. It catalyses the reaction alpha-D-xylose = alpha-D-xylulofuranose. The protein is Xylose isomerase of Burkholderia cenocepacia (strain HI2424).